The primary structure comprises 176 residues: Large ribosomal subunit protein uL16 (176 aa).

The protein belongs to the universal ribosomal protein uL16 family.

This chain is Large ribosomal subunit protein uL16, found in Sulfolobus acidocaldarius (strain ATCC 33909 / DSM 639 / JCM 8929 / NBRC 15157 / NCIMB 11770).